The following is a 444-amino-acid chain: Trigger factor (444 aa).

One can recognise a PPIase FKBP-type domain in the interval D160–P245.

It belongs to the FKBP-type PPIase family. Tig subfamily.

The protein localises to the cytoplasm. The catalysed reaction is [protein]-peptidylproline (omega=180) = [protein]-peptidylproline (omega=0). Functionally, involved in protein export. Acts as a chaperone by maintaining the newly synthesized protein in an open conformation. Functions as a peptidyl-prolyl cis-trans isomerase. The polypeptide is Trigger factor (Acinetobacter baylyi (strain ATCC 33305 / BD413 / ADP1)).